The chain runs to 115 residues: Non-specific lipid-transfer protein (115 aa).

The signal sequence occupies residues 1-24; sequence MASSAVIKLALVVALCMAVSVAHA. 4 disulfide bridges follow: cysteine 27/cysteine 74, cysteine 37/cysteine 51, cysteine 52/cysteine 97, and cysteine 72/cysteine 111.

This sequence belongs to the plant LTP family.

Its function is as follows. Plant non-specific lipid-transfer proteins transfer phospholipids as well as galactolipids across membranes. May play a role in wax or cutin deposition in the cell walls of expanding epidermal cells and certain secretory tissues. The protein is Non-specific lipid-transfer protein of Pyrus communis (Pear).